The chain runs to 176 residues: Probable RNA-binding protein EIF1AD (176 aa).

The 85-residue stretch at 5–89 (TKKRYITNKV…VKGEIEYILD (85 aa)) folds into the S1-like domain. Residues 117-128 (AKRGKANDKMID) show a composition bias toward basic and acidic residues. Residues 117-176 (AKRGKANDKMIDDDMLPPSESEEEDDESEDEIEDTYDEDEETDDEEFDTYNPNRMQAPSK) form a disordered region. Residues 129–164 (DDMLPPSESEEEDDESEDEIEDTYDEDEETDDEEFD) are compositionally biased toward acidic residues. The span at 166–176 (YNPNRMQAPSK) shows a compositional bias: polar residues.

It belongs to the EIF1AD family.

In Caenorhabditis briggsae, this protein is Probable RNA-binding protein EIF1AD.